We begin with the raw amino-acid sequence, 245 residues long: MSDPSVYDETAIEAYDLVSSMLSPGAGLVAWVSSHRPLDGRTVLDLGCGTGVSSFALAEAGARVVAVDASRPSLDMLEKKRLDRDVEAVEGDFRDLTFDSTFDVVTMSRNTFFLAQEQEEKIALLRGIARHLKPGGAAFLDCTDPAEFQRAGGDARSVTYPLGRDRMVTVTQTADRAGQQILSIFLVQGATTLTAFHEQATWATLAEIRLMARIAGLEVTGVDGSYAGEPYTARSREMLVVLERQ.

It belongs to the methyltransferase superfamily.

The enzyme catalyses N-terminal L-alanyl-[cypemycin] + 2 S-adenosyl-L-methionine = N-terminal N,N-dimethyl-L-alanyl-[cypemycin] + 2 S-adenosyl-L-homocysteine + 3 H(+). Involved in the biosynthesis of the lanaridin cypemycin. The enzyme can methylate a variety of oligopeptides, cyclic peptides and the epsilon-amino group of lysine. This chain is Cypemycin N-terminal methyltransferase, found in Streptomyces sp.